Consider the following 339-residue polypeptide: tRNA N6-adenosine threonylcarbamoyltransferase (339 aa).

Fe cation contacts are provided by His111 and His115. Residues 134–138, Asp167, Gly180, and Asn272 each bind substrate; that span reads LVSGG. A Fe cation-binding site is contributed by Asp300.

The protein belongs to the KAE1 / TsaD family. The cofactor is Fe(2+).

The protein resides in the cytoplasm. It carries out the reaction L-threonylcarbamoyladenylate + adenosine(37) in tRNA = N(6)-L-threonylcarbamoyladenosine(37) in tRNA + AMP + H(+). In terms of biological role, required for the formation of a threonylcarbamoyl group on adenosine at position 37 (t(6)A37) in tRNAs that read codons beginning with adenine. Is involved in the transfer of the threonylcarbamoyl moiety of threonylcarbamoyl-AMP (TC-AMP) to the N6 group of A37, together with TsaE and TsaB. TsaD likely plays a direct catalytic role in this reaction. This Sodalis glossinidius (strain morsitans) protein is tRNA N6-adenosine threonylcarbamoyltransferase.